Consider the following 303-residue polypeptide: Putative S-adenosyl-L-methionine-dependent methyltransferase SCO6443 (303 aa).

S-adenosyl-L-methionine-binding positions include D130 and 159–160 (DL).

The protein belongs to the UPF0677 family.

Exhibits S-adenosyl-L-methionine-dependent methyltransferase activity. In Streptomyces coelicolor (strain ATCC BAA-471 / A3(2) / M145), this protein is Putative S-adenosyl-L-methionine-dependent methyltransferase SCO6443.